An 89-amino-acid polypeptide reads, in one-letter code: Small ribosomal subunit protein uS15 (89 aa).

The protein belongs to the universal ribosomal protein uS15 family. Part of the 30S ribosomal subunit. Forms a bridge to the 50S subunit in the 70S ribosome, contacting the 23S rRNA.

Its function is as follows. One of the primary rRNA binding proteins, it binds directly to 16S rRNA where it helps nucleate assembly of the platform of the 30S subunit by binding and bridging several RNA helices of the 16S rRNA. Functionally, forms an intersubunit bridge (bridge B4) with the 23S rRNA of the 50S subunit in the ribosome. This chain is Small ribosomal subunit protein uS15, found in Synechococcus elongatus (strain ATCC 33912 / PCC 7942 / FACHB-805) (Anacystis nidulans R2).